The following is a 301-amino-acid chain: D-alanine--D-alanine ligase A (301 aa).

An ATP-grasp domain is found at 96-290 (KKILRYEGVE…YSKLLDMIIE (195 aa)). 123-178 (LDKLGFPLVVKPNSGGSSVGVKIVYNKNELISMLETVFEWDSEVVIEKYIKGDEIT) contacts ATP. Residues aspartate 245, glutamate 257, and asparagine 259 each coordinate Mg(2+).

It belongs to the D-alanine--D-alanine ligase family. Mg(2+) is required as a cofactor. It depends on Mn(2+) as a cofactor.

It localises to the cytoplasm. The catalysed reaction is 2 D-alanine + ATP = D-alanyl-D-alanine + ADP + phosphate + H(+). Its pathway is cell wall biogenesis; peptidoglycan biosynthesis. In terms of biological role, cell wall formation. This Bacillus cereus (strain ATCC 14579 / DSM 31 / CCUG 7414 / JCM 2152 / NBRC 15305 / NCIMB 9373 / NCTC 2599 / NRRL B-3711) protein is D-alanine--D-alanine ligase A.